Here is a 359-residue protein sequence, read N- to C-terminus: Halocin-H4 (359 aa).

The first 46 residues, 1-46 (MSKDRDGRRTSRRGTLKKIGGFSLGALSFGAVGRTQAATGSSVTTA), serve as a signal peptide directing secretion. Disordered stretches follow at residues 40-59 (GSSV…DPKS) and 340-359 (IPDR…SRKQ).

Its subcellular location is the secreted. Has antibacterial activity against other haloarchaeons. Interacts with the membrane of the target cells where it causes permeability changes that result in an ionic imbalance leading to cell lysis and death. This chain is Halocin-H4 (halH4), found in Haloferax mediterranei (strain ATCC 33500 / DSM 1411 / JCM 8866 / NBRC 14739 / NCIMB 2177 / R-4) (Halobacterium mediterranei).